The chain runs to 164 residues: Thiol peroxidase (164 aa).

The region spanning 18 to 163 is the Thioredoxin domain; it reads INEGDFAPDF…FDAALAAYKN (146 aa). Residue C60 is the Cysteine sulfenic acid (-SOH) intermediate of the active site. C60 and C93 are oxidised to a cystine.

This sequence belongs to the peroxiredoxin family. Tpx subfamily. In terms of assembly, homodimer.

It catalyses the reaction a hydroperoxide + [thioredoxin]-dithiol = an alcohol + [thioredoxin]-disulfide + H2O. Functionally, thiol-specific peroxidase that catalyzes the reduction of hydrogen peroxide and organic hydroperoxides to water and alcohols, respectively. Plays a role in cell protection against oxidative stress by detoxifying peroxides. The chain is Thiol peroxidase from Staphylococcus aureus (strain COL).